A 312-amino-acid chain; its full sequence is Small ribosomal subunit protein uS2 (312 aa).

Positions 232-312 are disordered; it reads RASGAAERDE…AAPEGEAAAE (81 aa). The span at 245 to 284 shows a compositional bias: basic and acidic residues; it reads REGRDDRGDRRDDRRGPRRGDRRDDRRDRGGDRGGDRRGP. Residues 291–312 are compositionally biased toward low complexity; that stretch reads AAPVASAEPAAEAAPEGEAAAE.

The protein belongs to the universal ribosomal protein uS2 family.

The protein is Small ribosomal subunit protein uS2 of Myxococcus xanthus (strain DK1622).